Here is a 578-residue protein sequence, read N- to C-terminus: MLSCNICGETVTSEPDMKAHLIVHMESEIICPFCKLSGVNYDEMCFHIETAHFEQNTLERNFERINTVQYGTSDNKKDNTLQCGMEVNSSILSGCASNHPKNSAQNLTKDSTLKHEGFYSENLTESRKFLKSREKQSSLTEIKGSVYETTYSPPECPFCGKIEEHSEDMETHVKTKHANLLDIPLEDCDQPLYDCPMCGLICTNYHILQEHVDLHLEENSFQQGMDRVQCSGDLQLAHQLQQEEDRKRRSEESRQEIEEFQKLQRQYGLDNSGGYKQQQLRNMEIEVNRGRMPPSEFHRRKADMMESLALGFDDGKTKTSGIIEALHRYYQNAATDVRRVWLSSVVDHFHSSLGDKGWGCGYRNFQMLLSSLLQNDAYNDCLKGMLIPCIPKIQSMIEDAWKEGFDPQGASQLNNRLQGTKAWIGACEVYILLTSLRVKCHIVDFHKSTGPLGTHPRLFEWILNYYSSEGEGSPKVVCTSKPPIYLQHQGHSRTVIGIEEKKNRTLCLLILDPGCPSREMQKLLKQDIEASSLKQLRKSMGNLKHKQYQILAVEGALSLEEKLARRQASQVFTAEKIP.

A C2H2-type 1 zinc finger spans residues 2–24; the sequence is LSCNICGETVTSEPDMKAHLIVH. The C2H2-type 2; atypical zinc-finger motif lies at 29 to 52; the sequence is IICPFCKLSGVNYDEMCFHIETAH. 2 C2H2-type zinc fingers span residues 154–177 and 193–215; these read PECP…KTKH and YDCP…VDLH. Residues 226-248 form an MIU region; sequence DRVQCSGDLQLAHQLQQEEDRKR. The interval 249-274 is zUBD/ZHA; sequence RSEESRQEIEEFQKLQRQYGLDNSGG. Lys262 carries the N6-acetyllysine modification. The active-site Nucleophile is Cys360. His491 (proton acceptor) is an active-site residue. Asp512 is an active-site residue.

It belongs to the peptidase C78 family. ZUFSP subfamily. In terms of assembly, interacts with RPA1 and RPA2.

It is found in the cytoplasm. It localises to the nucleus. It catalyses the reaction Thiol-dependent hydrolysis of ester, thioester, amide, peptide and isopeptide bonds formed by the C-terminal Gly of ubiquitin (a 76-residue protein attached to proteins as an intracellular targeting signal).. Functionally, deubiquitinase with endodeubiquitinase activity that specifically interacts with and cleaves 'Lys-63'-linked long polyubiquitin chains. Shows only weak activity against 'Lys-11' and 'Lys-48'-linked chains. Plays an important role in genome stability pathways, functioning to prevent spontaneous DNA damage and also promote cellular survival in response to exogenous DNA damage. Modulates the ubiquitination status of replication protein A (RPA) complex proteins in response to replication stress. The chain is Zinc finger-containing ubiquitin peptidase 1 from Homo sapiens (Human).